A 182-amino-acid chain; its full sequence is Ribosome maturation factor RimM (182 aa).

Residues Glu-103 to Phe-182 form the PRC barrel domain.

The protein belongs to the RimM family. In terms of assembly, binds ribosomal protein uS19.

It is found in the cytoplasm. Functionally, an accessory protein needed during the final step in the assembly of 30S ribosomal subunit, possibly for assembly of the head region. Essential for efficient processing of 16S rRNA. May be needed both before and after RbfA during the maturation of 16S rRNA. It has affinity for free ribosomal 30S subunits but not for 70S ribosomes. The chain is Ribosome maturation factor RimM from Vibrio cholerae serotype O1 (strain ATCC 39315 / El Tor Inaba N16961).